A 202-amino-acid polypeptide reads, in one-letter code: Sperm-specific H1/protamine-like protein type 1 (202 aa).

The span at 1-35 (MPSPSRKSRSRSRSRSKSPKRSPAKKARKTPKKPR) shows a compositional bias: basic residues. 2 disordered regions span residues 1–46 (MPSP…PTTL) and 104–202 (KTSA…QFAL). An H15 domain is found at 41 to 120 (KKPTTLSMIV…GATGSFRVGK (80 aa)). Positions 126-156 (KKAKKAKSPKKKSSKKSKNKSNNAKAKKSPK) are enriched in basic residues. Over residues 177 to 187 (GARYPFRYQAY) the composition is skewed to low complexity.

Post-translationally, OE1 and OE3 are produced by post-translational cleavage of a common precursor. Sperm.

The protein localises to the nucleus. The protein resides in the chromosome. Functionally, linker histones are implicated in chromatin remodeling and/or transcriptional regulation during spermiogenesis, the process of spermatid maturation into spermatozoa. Protamines substitute for histones in the chromatin of sperm during the haploid phase of spermatogenesis. They compact sperm DNA into a highly condensed, stable and inactive complex. This Ostrea edulis (Native oyster) protein is Sperm-specific H1/protamine-like protein type 1.